Reading from the N-terminus, the 202-residue chain is Holliday junction resolvase RecU (202 aa).

Positions 85, 87, 100, and 119 each coordinate Mg(2+).

This sequence belongs to the RecU family. It depends on Mg(2+) as a cofactor.

The protein resides in the cytoplasm. It carries out the reaction Endonucleolytic cleavage at a junction such as a reciprocal single-stranded crossover between two homologous DNA duplexes (Holliday junction).. Its function is as follows. Endonuclease that resolves Holliday junction intermediates in genetic recombination. Cleaves mobile four-strand junctions by introducing symmetrical nicks in paired strands. Promotes annealing of linear ssDNA with homologous dsDNA. Required for DNA repair, homologous recombination and chromosome segregation. This Streptococcus uberis (strain ATCC BAA-854 / 0140J) protein is Holliday junction resolvase RecU.